Consider the following 309-residue polypeptide: Dihydroorotate dehydrogenase B (NAD(+)), catalytic subunit (309 aa).

FMN is bound by residues Ser21 and 45–46 (KA). Substrate contacts are provided by residues Lys45 and 69 to 73 (NAIGL). Residues Asn99 and Asn127 each contribute to the FMN site. Asn127 contributes to the substrate binding site. The active-site Nucleophile is the Cys130. FMN contacts are provided by Lys165 and Ile191. 192-193 (NT) contacts substrate. FMN-binding positions include Gly217, 243 to 244 (GG), and 265 to 266 (GT).

The protein belongs to the dihydroorotate dehydrogenase family. Type 1 subfamily. As to quaternary structure, heterotetramer of 2 PyrK and 2 PyrD type B subunits. FMN serves as cofactor.

The protein localises to the cytoplasm. The enzyme catalyses (S)-dihydroorotate + NAD(+) = orotate + NADH + H(+). The protein operates within pyrimidine metabolism; UMP biosynthesis via de novo pathway; orotate from (S)-dihydroorotate (NAD(+) route): step 1/1. Functionally, catalyzes the conversion of dihydroorotate to orotate with NAD(+) as electron acceptor. This is Dihydroorotate dehydrogenase B (NAD(+)), catalytic subunit (pyrD) from Bacillus cereus (strain ATCC 14579 / DSM 31 / CCUG 7414 / JCM 2152 / NBRC 15305 / NCIMB 9373 / NCTC 2599 / NRRL B-3711).